Consider the following 422-residue polypeptide: Serine--tRNA ligase (422 aa).

Position 229 to 231 (T229 to E231) interacts with L-serine. R258–E260 serves as a coordination point for ATP. An L-serine-binding site is contributed by E281. ATP is bound at residue E345–S348. L-serine is bound at residue S379.

This sequence belongs to the class-II aminoacyl-tRNA synthetase family. Type-1 seryl-tRNA synthetase subfamily. As to quaternary structure, homodimer. The tRNA molecule binds across the dimer.

It is found in the cytoplasm. It catalyses the reaction tRNA(Ser) + L-serine + ATP = L-seryl-tRNA(Ser) + AMP + diphosphate + H(+). It carries out the reaction tRNA(Sec) + L-serine + ATP = L-seryl-tRNA(Sec) + AMP + diphosphate + H(+). The protein operates within aminoacyl-tRNA biosynthesis; selenocysteinyl-tRNA(Sec) biosynthesis; L-seryl-tRNA(Sec) from L-serine and tRNA(Sec): step 1/1. Functionally, catalyzes the attachment of serine to tRNA(Ser). Is also able to aminoacylate tRNA(Sec) with serine, to form the misacylated tRNA L-seryl-tRNA(Sec), which will be further converted into selenocysteinyl-tRNA(Sec). The chain is Serine--tRNA ligase from Methanosarcina mazei (strain ATCC BAA-159 / DSM 3647 / Goe1 / Go1 / JCM 11833 / OCM 88) (Methanosarcina frisia).